The following is a 1407-amino-acid chain: DNA-directed RNA polymerase subunit beta' (1407 aa).

Zn(2+) is bound by residues Cys70, Cys72, Cys85, and Cys88. The Mg(2+) site is built by Asp460, Asp462, and Asp464. Zn(2+) contacts are provided by Cys814, Cys888, Cys895, and Cys898. N6-acetyllysine is present on Lys972.

Belongs to the RNA polymerase beta' chain family. The RNAP catalytic core consists of 2 alpha, 1 beta, 1 beta' and 1 omega subunit. When a sigma factor is associated with the core the holoenzyme is formed, which can initiate transcription. It depends on Mg(2+) as a cofactor. Zn(2+) serves as cofactor.

The enzyme catalyses RNA(n) + a ribonucleoside 5'-triphosphate = RNA(n+1) + diphosphate. DNA-dependent RNA polymerase catalyzes the transcription of DNA into RNA using the four ribonucleoside triphosphates as substrates. In Shigella dysenteriae serotype 1 (strain Sd197), this protein is DNA-directed RNA polymerase subunit beta'.